Consider the following 259-residue polypeptide: Haloacid dehalogenase-like hydrolase domain-containing protein 2 (259 aa).

Residues aspartate 13 and serine 15 each contribute to the Mg(2+) site. Residues 13 to 15 and 46 to 47 contribute to the substrate site; these read DLS and TN. Residues 47-71 are a coiled coil; sequence NTTKESKQDLLERLKKLEFDISEDE. Lysine 50 carries the N6-succinyllysine modification. Residue lysine 179 participates in substrate binding. A Mg(2+)-binding site is contributed by aspartate 204.

This sequence belongs to the HAD-like hydrolase superfamily. It depends on Mg(2+) as a cofactor.

This Bos taurus (Bovine) protein is Haloacid dehalogenase-like hydrolase domain-containing protein 2 (HDHD2).